The following is a 626-amino-acid chain: Chaperone protein HtpG (626 aa).

Residues 1–339 are a; substrate-binding; that stretch reads MSQNQETRGF…SNDLPLNVSR (339 aa). Residues 340 to 555 are b; that stretch reads EILQDNKITA…NDQMTTQMAK (216 aa). The tract at residues 556–626 is c; sequence LFAAAGQPVP…FIKRINKLLG (71 aa).

It belongs to the heat shock protein 90 family. Homodimer.

Its subcellular location is the cytoplasm. Functionally, molecular chaperone. Has ATPase activity. The sequence is that of Chaperone protein HtpG from Haemophilus influenzae (strain ATCC 51907 / DSM 11121 / KW20 / Rd).